The following is a 511-amino-acid chain: Glycerol kinase (511 aa).

T11 is a binding site for ADP. Positions 11, 12, and 13 each coordinate ATP. Residue T11 participates in sn-glycerol 3-phosphate binding. R15 contacts ADP. Residues R81, E82, Y133, and D242 each coordinate sn-glycerol 3-phosphate. Glycerol contacts are provided by R81, E82, Y133, D242, and Q243. ADP contacts are provided by T264 and G321. ATP is bound by residues T264, G321, Q325, and G426. ADP is bound by residues G426 and N430.

The protein belongs to the FGGY kinase family.

It catalyses the reaction glycerol + ATP = sn-glycerol 3-phosphate + ADP + H(+). Its pathway is polyol metabolism; glycerol degradation via glycerol kinase pathway; sn-glycerol 3-phosphate from glycerol: step 1/1. Inhibited by fructose 1,6-bisphosphate (FBP). Key enzyme in the regulation of glycerol uptake and metabolism. Catalyzes the phosphorylation of glycerol to yield sn-glycerol 3-phosphate. The polypeptide is Glycerol kinase (Verminephrobacter eiseniae (strain EF01-2)).